The primary structure comprises 75 residues: Gas vesicle protein S (75 aa).

Belongs to the gas vesicle GvpA family.

It is found in the gas vesicle. In terms of biological role, probably a minor component of the gas vesicle. Gas vesicles are hollow, gas filled proteinaceous nanostructures found in some microorganisms. It is not clear what function gas vesicles perform in soil bacteria. This is Gas vesicle protein S from Streptomyces sp. (strain CB03234).